Here is a 508-residue protein sequence, read N- to C-terminus: D-alanine--D-alanyl carrier protein ligase (508 aa).

152 to 153 (TS) lines the ATP pocket. D198 is a binding site for D-alanine. 293–298 (NTYGPT) is a binding site for ATP. Residue V302 participates in D-alanine binding. ATP contacts are provided by residues D384, 396 to 399 (YRGR), and K495. K495 contacts D-alanine.

This sequence belongs to the ATP-dependent AMP-binding enzyme family. DltA subfamily.

It is found in the cytoplasm. It carries out the reaction holo-[D-alanyl-carrier protein] + D-alanine + ATP = D-alanyl-[D-alanyl-carrier protein] + AMP + diphosphate. It functions in the pathway cell wall biogenesis; lipoteichoic acid biosynthesis. Its function is as follows. Catalyzes the first step in the D-alanylation of lipoteichoic acid (LTA), the activation of D-alanine and its transfer onto the D-alanyl carrier protein (Dcp) DltC. In an ATP-dependent two-step reaction, forms a high energy D-alanyl-AMP intermediate, followed by transfer of the D-alanyl residue as a thiol ester to the phosphopantheinyl prosthetic group of the Dcp. D-alanylation of LTA plays an important role in modulating the properties of the cell wall in Gram-positive bacteria, influencing the net charge of the cell wall. The sequence is that of D-alanine--D-alanyl carrier protein ligase from Lactiplantibacillus plantarum (strain ATCC BAA-793 / NCIMB 8826 / WCFS1) (Lactobacillus plantarum).